Reading from the N-terminus, the 92-residue chain is MGRSLKKGPFIADSLLKKVEKQNTDNDKSVIKTWSRSSTILPVMIGHTIAVHNGKTHIPVFITEQMIGHKLGEFAPTRTYRGHIRDKKGAKS.

Belongs to the universal ribosomal protein uS19 family.

Functionally, protein S19 forms a complex with S13 that binds strongly to the 16S ribosomal RNA. This is Small ribosomal subunit protein uS19 from Prochlorococcus marinus (strain MIT 9215).